The sequence spans 998 residues: tRNA (34-2'-O)-methyltransferase regulator WDR6 (998 aa).

WD repeat units follow at residues leucine 148 to proline 185, alanine 200 to threonine 239, glycine 250 to arginine 291, glutamine 294 to lysine 333, asparagine 476 to glutamine 515, methionine 527 to arginine 566, valine 567 to leucine 608, arginine 664 to arginine 704, alanine 779 to leucine 821, aspartate 826 to glutamine 865, and leucine 868 to lysine 911.

The protein belongs to the WD repeat WDR6 family. As to quaternary structure, interacts with Trm7-34.

It is found in the cytoplasm. Together with methyltransferase Trm7-34, methylates the 2'-O-ribose of nucleotides at position 34 of the anticodon loop of substrate tRNAs. The chain is tRNA (34-2'-O)-methyltransferase regulator WDR6 from Drosophila melanogaster (Fruit fly).